The sequence spans 542 residues: Organic anion transporter 3 (542 aa).

The Cytoplasmic segment spans residues 1-9 (MTFSEILDR). Ser-4 carries the post-translational modification Phosphoserine. The helical transmembrane segment at 10–30 (VGSMGHFQFLHVAILGLPILN) threads the bilayer. Over 31 to 123 (MANHNLLQIF…LVCNSNKLKE (93 aa)) the chain is Extracellular. N-linked (GlcNAc...) asparagine glycosylation is found at Asn-86 and Asn-102. The helical transmembrane segment at 124–144 (MAQSIFMAGILIGGLVLGDLS) threads the bilayer. The Cytoplasmic portion of the chain corresponds to 145–154 (DRFGRRPILT). The chain crosses the membrane as a helical span at residues 155 to 175 (CSYLLLAASGSGAAFSPTFPI). Residue Tyr-176 is a topological domain, extracellular. The chain crosses the membrane as a helical span at residues 177–197 (MVFRFLCGFGISGITLSTVIL). The Cytoplasmic portion of the chain corresponds to 198–212 (NVEWVPTRMRAIMST). Residues 213–233 (ALGYCYTFGQFILPGLAYAIP) form a helical membrane-spanning segment. At 234–236 (QWR) the chain is on the extracellular side. The helical transmembrane segment at 237 to 257 (WLQLTVSIPFFVFFLSSWWTP) threads the bilayer. The Cytoplasmic portion of the chain corresponds to 258–327 (ESIRWLVLSG…FRIPMLRRMT (70 aa)). The chain crosses the membrane as a helical span at residues 328–348 (FCLSLAWFATGFAYYSLAMGV). The Extracellular segment spans residues 349–354 (EEFGVN). A helical membrane pass occupies residues 355–375 (LYILQIIFGGVDVPAKFITIL). The Cytoplasmic portion of the chain corresponds to 376-386 (SLSYLGRHTTQ). Residues 387-407 (AAALLLAGGAILALTFVPLDL) form a helical membrane-spanning segment. Topologically, residues 408 to 411 (QTVR) are extracellular. Residues 412–432 (TVLAVFGKGCLSSSFSCLFLY) traverse the membrane as a helical segment. At 433–471 (TSELYPTVIRQTGMGVSNLWTRVGSMVSPLVKITGEVQP) the chain is on the cytoplasmic side. The chain crosses the membrane as a helical span at residues 472 to 492 (FIPNIIYGITALLGGSAALFL). Residues 493-542 (PETLNQPLPETIEDLENWSLRAKKPKQEPEVEKASQRIPLQPHGPGLGSS) lie on the Extracellular side of the membrane. The segment at 515–542 (KKPKQEPEVEKASQRIPLQPHGPGLGSS) is disordered. The span at 517–527 (PKQEPEVEKAS) shows a compositional bias: basic and acidic residues.

Belongs to the major facilitator (TC 2.A.1) superfamily. Organic cation transporter (TC 2.A.1.19) family. Strongly expressed in kidney. Weaker expression in brain and skeletal muscle. Expressed in adrenal glands.

The protein localises to the basolateral cell membrane. It catalyses the reaction estrone 3-sulfate(out) + glutarate(in) = estrone 3-sulfate(in) + glutarate(out). The enzyme catalyses estrone 3-sulfate(in) + 2-oxoglutarate(out) = estrone 3-sulfate(out) + 2-oxoglutarate(in). It carries out the reaction glutarate(in) + 2-oxoglutarate(out) = glutarate(out) + 2-oxoglutarate(in). The catalysed reaction is urate(in) + 2-oxoglutarate(out) = urate(out) + 2-oxoglutarate(in). It catalyses the reaction taurocholate(out) + glutarate(in) = taurocholate(in) + glutarate(out). The enzyme catalyses dehydroepiandrosterone 3-sulfate(out) + glutarate(in) = dehydroepiandrosterone 3-sulfate(in) + glutarate(out). It carries out the reaction prostaglandin F2alpha(out) + glutarate(in) = prostaglandin F2alpha(in) + glutarate(out). The catalysed reaction is prostaglandin F2alpha(out) + 2-oxoglutarate(in) = prostaglandin F2alpha(in) + 2-oxoglutarate(out). It catalyses the reaction (R)-carnitine(out) + 2-oxoglutarate(in) = (R)-carnitine(in) + 2-oxoglutarate(out). The enzyme catalyses glutarate(in) + (R)-carnitine(out) = glutarate(out) + (R)-carnitine(in). It carries out the reaction prostaglandin E2(out) + 2-oxoglutarate(in) = prostaglandin E2(in) + 2-oxoglutarate(out). The catalysed reaction is prostaglandin E2(out) + glutarate(in) = prostaglandin E2(in) + glutarate(out). It catalyses the reaction urate(in) + glutarate(out) = urate(out) + glutarate(in). The enzyme catalyses taurocholate(out) + 2-oxoglutarate(in) = taurocholate(in) + 2-oxoglutarate(out). It carries out the reaction dehydroepiandrosterone 3-sulfate(out) + 2-oxoglutarate(in) = dehydroepiandrosterone 3-sulfate(in) + 2-oxoglutarate(out). The catalysed reaction is kynurenate(out) + a dicarboxylate(in) = kynurenate(in) + a dicarboxylate(out). It catalyses the reaction (indol-3-yl)acetate(out) + a dicarboxylate(in) = (indol-3-yl)acetate(in) + a dicarboxylate(out). The enzyme catalyses indoxyl sulfate(out) + a dicarboxylate(in) = indoxyl sulfate(in) + a dicarboxylate(out). It carries out the reaction N-benzoylglycine(out) + a dicarboxylate(in) = N-benzoylglycine(in) + a dicarboxylate(out). The catalysed reaction is 3-carboxy-4-methyl-5-propyl-2-furanpropanoate(out) + a dicarboxylate(in) = 3-carboxy-4-methyl-5-propyl-2-furanpropanoate(in) + a dicarboxylate(out). It catalyses the reaction (6R)-L-erythro-5,6,7,8-tetrahydrobiopterin(out) + a dicarboxylate(in) = (6R)-L-erythro-5,6,7,8-tetrahydrobiopterin(in) + a dicarboxylate(out). The enzyme catalyses L-erythro-7,8-dihydrobiopterin(out) + a dicarboxylate(in) = L-erythro-7,8-dihydrobiopterin(in) + a dicarboxylate(out). It carries out the reaction L-sepiapterin(out) + a dicarboxylate(in) = L-sepiapterin(in) + a dicarboxylate(out). Functionally, functions as an organic anion/dicarboxylate exchanger that couples organic anion uptake indirectly to the sodium gradient. Transports organic anions such as estrone 3-sulfate (E1S) and urate in exchange for dicarboxylates such as glutarate or ketoglutarate (2-oxoglutarate). Plays an important role in the excretion of endogenous and exogenous organic anions, especially from the kidney and the brain. E1S transport is pH- and chloride-dependent and may also involve E1S/cGMP exchange. Responsible for the transport of prostaglandin E2 (PGE2) and prostaglandin F2(alpha) (PGF2(alpha)) in the basolateral side of the renal tubule. Involved in the transport of neuroactive tryptophan metabolites kynurenate and xanthurenate. Functions as a biopterin transporters involved in the uptake and the secretion of coenzymes tetrahydrobiopterin (BH4), dihydrobiopterin (BH2) and sepiapterin to urine, thereby determining baseline levels of blood biopterins. May be involved in the basolateral transport of steviol, a metabolite of the popular sugar substitute stevioside. May participate in the detoxification/ renal excretion of drugs and xenobiotics, such as the histamine H(2)-receptor antagonists fexofenadine and cimetidine, the antibiotic benzylpenicillin (PCG), the anionic herbicide 2,4-dichloro-phenoxyacetate (2,4-D), the diagnostic agent p-aminohippurate (PAH), the antiviral acyclovir (ACV), and the mycotoxin ochratoxin (OTA), by transporting these exogenous organic anions across the cell membrane in exchange for dicarboxylates such as 2-oxoglutarate. Contributes to the renal uptake of potent uremic toxins (indoxyl sulfate (IS), indole acetate (IA), hippurate/N-benzoylglycine (HA) and 3-carboxy-4-methyl-5-propyl-2-furanpropionate (CMPF)), pravastatin, PCG, E1S and dehydroepiandrosterone sulfate (DHEAS), and is partly involved in the renal uptake of temocaprilat (an angiotensin-converting enzyme (ACE) inhibitor). May contribute to the release of cortisol in the adrenals. Involved in one of the detoxification systems on the choroid plexus (CP), removes substrates such as E1S or taurocholate (TC), PCG, 2,4-D and PAH, from the cerebrospinal fluid (CSF) to the blood for eventual excretion in urine and bile. Also contributes to the uptake of several other organic compounds such as the prostanoids prostaglandin E(2) and prostaglandin F(2-alpha), L-carnitine, and the therapeutic drugs allopurinol, 6-mercaptopurine (6-MP) and 5-fluorouracil (5-FU). Mediates the transport of PAH, PCG, and the statins pravastatin and pitavastatin, from the cerebrum into the blood circulation across the blood-brain barrier (BBB). In summary, plays a role in the efflux of drugs and xenobiotics, helping reduce their undesired toxicological effects on the body. This Homo sapiens (Human) protein is Organic anion transporter 3.